Reading from the N-terminus, the 486-residue chain is FAD-dependent oxidoreductase domain-containing protein 1 (486 aa).

The chain crosses the membrane as a helical span at residues 62–82; it reads EHSDVVIVGGGVLGLSVAYWL.

In terms of assembly, associates with components of the mitochondrial respiratory chain complex I. The cofactor is FAD.

It localises to the mitochondrion inner membrane. Required for the assembly of the mitochondrial membrane respiratory chain NADH dehydrogenase (Complex I). Involved in mid-late stages of complex I assembly. The protein is FAD-dependent oxidoreductase domain-containing protein 1 of Homo sapiens (Human).